The sequence spans 103 residues: Protamine-2 (103 aa).

Residues 1–103 (MVRYRTRSLS…RTRRRRCRRY (103 aa)) are disordered. 2 positions are modified to phosphoserine: Ser8 and Ser10. A compositionally biased stretch (basic and acidic residues) spans 8-17 (SLSERPHEVH). Residues 18-29 (GQQVHGQDQGHN) show a composition bias toward low complexity. Ser37 is subject to Phosphoserine. The span at 39 to 48 (EHVEVYERTH) shows a compositional bias: basic and acidic residues. The span at 49 to 103 (QGHSHHRRRRCSQRRLHRIHRRRHRSCRRRRRRSCRHRRRHRRGCRTRRRRCRRY) shows a compositional bias: basic residues.

The protein belongs to the protamine P2 family. As to quaternary structure, interacts with TDRP. In terms of processing, proteolytic processing into mature chains is required for histone eviction during spermatogenesis. Transition proteins (TNP1 and TNP2) are required for processing. Testis.

The protein localises to the nucleus. It localises to the chromosome. In terms of biological role, protamines substitute for histones in the chromatin of sperm during the haploid phase of spermatogenesis. They compact sperm DNA into a highly condensed, stable and inactive complex. The sequence is that of Protamine-2 (PRM2) from Erythrocebus patas (Red guenon).